A 183-amino-acid polypeptide reads, in one-letter code: uncharacterized protein (183 aa).

This sequence belongs to the isochorismatase family.

This is an uncharacterized protein from Bacillus subtilis (strain 168).